Here is a 378-residue protein sequence, read N- to C-terminus: MDPGDDWLVESLRLYQDFYAFDLSGATRVLEWIDDKGVFVAGYESLKKNEILHLKLPLRLSVKENKGLFPERDFKVRHGGFSDRSIFDLKHVPHTRLLVTSGLPGCYLQVWQVAEDSDVIKAVSTIAVHEKEESLWPRVAVFSTLAPGVLHGARLRSLQVVDLESRKTTYTSDVSDSEELSSLQVLDADTFAFCCASGRLGLVDTRQKWAPLENRSPGPGSGGERWCAEVGSWGQGPGPSIASLGSDGRLCLLDPRDLCHPVSSVQCPVSVPSPDPELLRVTWAPGLKNCLAISGFDGTVQVYDATSWDGTRSQDGTRSQVEPLFTHRGHIFLDGNGMDPAPLVTTHTWHPCRPRTLLSATNDASLHVWDWVDLCAPR.

WD repeat units follow at residues 73 to 113 (DFKV…VWQV), 121 to 163 (KAVS…VVDL), 167 to 205 (KTTY…LVDT), 214 to 255 (NRSP…LLDP), 266 to 305 (QCPV…VYDA), and 322 to 371 (EPLF…VWDW).

The protein belongs to the WD repeat WDR73 family. Interacts with INTS9 and INTS11; the interaction is direct. Part of the multiprotein complex composed of BRAT1, WDR73, as well as integrator complex subunits INTS9 and INTS11. Expressed in kidney and brain. In the kidney, expressed in glomeruli, most probably in podocytes, and in tubules (at protein level). In the brain, expressed in the cerebellum, with high levels in Purkinje cells and their projecting axons, in the deep cerebellar nuclei and in pyramidal neurons of the cerebral cortex (at protein level). In the white matter, mainly present in astrocytes, but not in oligodendrocytes (at protein level). Also highly expressed in endothelial cells of cerebral capillaries (at protein level).

It localises to the cytoplasm. The protein resides in the cytoskeleton. The protein localises to the spindle. It is found in the spindle pole. Its subcellular location is the cleavage furrow. In terms of biological role, component of a multiprotein complex required for the assembly of the RNA endonuclease module of the integrator complex. Associates with INTS9 and INTS11 in the cytoplasm, stabilizing the INTS9-INTS11 heterodimer and blocking the active site of INTS11. BRAT1 then joins the complex and plugs the active site of INTS11, leading to WDR73 release and nuclear import of INTS9 and INTS11. The sequence is that of Integrator complex assembly factor WDR73 from Homo sapiens (Human).